Here is a 348-residue protein sequence, read N- to C-terminus: Probable dual-specificity RNA methyltransferase RlmN (348 aa).

E93 acts as the Proton acceptor in catalysis. One can recognise a Radical SAM core domain in the interval 99-333 (TEKRLTACLS…VSLRKSRGLD (235 aa)). A disulfide bond links C106 and C338. The [4Fe-4S] cluster site is built by C113, C117, and C120. S-adenosyl-L-methionine contacts are provided by residues 160-161 (GE), S190, 219-221 (SLH), and N295. Catalysis depends on C338, which acts as the S-methylcysteine intermediate.

It belongs to the radical SAM superfamily. RlmN family. It depends on [4Fe-4S] cluster as a cofactor.

Its subcellular location is the cytoplasm. It carries out the reaction adenosine(2503) in 23S rRNA + 2 reduced [2Fe-2S]-[ferredoxin] + 2 S-adenosyl-L-methionine = 2-methyladenosine(2503) in 23S rRNA + 5'-deoxyadenosine + L-methionine + 2 oxidized [2Fe-2S]-[ferredoxin] + S-adenosyl-L-homocysteine. The enzyme catalyses adenosine(37) in tRNA + 2 reduced [2Fe-2S]-[ferredoxin] + 2 S-adenosyl-L-methionine = 2-methyladenosine(37) in tRNA + 5'-deoxyadenosine + L-methionine + 2 oxidized [2Fe-2S]-[ferredoxin] + S-adenosyl-L-homocysteine. Specifically methylates position 2 of adenine 2503 in 23S rRNA and position 2 of adenine 37 in tRNAs. The polypeptide is Probable dual-specificity RNA methyltransferase RlmN (Prochlorococcus marinus (strain AS9601)).